A 92-amino-acid polypeptide reads, in one-letter code: Small ribosomal subunit protein uS19 (92 aa).

It belongs to the universal ribosomal protein uS19 family.

Functionally, protein S19 forms a complex with S13 that binds strongly to the 16S ribosomal RNA. This is Small ribosomal subunit protein uS19 from Magnetococcus marinus (strain ATCC BAA-1437 / JCM 17883 / MC-1).